The chain runs to 547 residues: MTAKDILFDADARAKLKVGVDKLANTVKVTLGPAGRNVLIDKKFGAPTSTKDGVTVAKEIELDDAIENMGAQMVREVASKTSDVAGDGTTTATVLAQAIYREGLKNVAAGARPIDLKRGIDRAVKEVVAELRNISRSISGKKEIAQVGTISANNDPEIGELIAEAMDKVGKDGVITVEEAKGMETELKVVEGMQFDRGYLSPYFVTNSETMEAELEDALILIHDKKIGNMKELLPILEKSAQSGRPLLIIAEDIEGEALATLVVNRLRGTLKVCAVKAPGFGDRRKAMLEDIAILTGGTVISEEKGYKLENATVNYLGQAARITVDKDNTTIVEGKGTQDEIKARINEIKGQIDKSTSDYDTEKLQERLAKLSGGVAVLNIGASTEVEMKEKKARVEDALHATRAAVQEGIVVGGGVALIRAIKGLSNAIADNEDQKTGIDIIRRALEEPLRQIVANTGTTDGAVVLERVKQGEGDFGFNARTEQYEDLVAAGVVDPTKVTRSALENAASVASILLTTEACITDIKEDKSDMPAMPPGGMGGMGGMY.

Residues 30-33, lysine 51, 87-91, glycine 415, and aspartate 496 contribute to the ATP site; these read TLGP and DGTTT. The segment at 528-547 is disordered; the sequence is DKSDMPAMPPGGMGGMGGMY. Gly residues predominate over residues 538–547; that stretch reads GGMGGMGGMY.

Belongs to the chaperonin (HSP60) family. Forms a cylinder of 14 subunits composed of two heptameric rings stacked back-to-back. Interacts with the co-chaperonin GroES.

The protein resides in the cytoplasm. The enzyme catalyses ATP + H2O + a folded polypeptide = ADP + phosphate + an unfolded polypeptide.. Together with its co-chaperonin GroES, plays an essential role in assisting protein folding. The GroEL-GroES system forms a nano-cage that allows encapsulation of the non-native substrate proteins and provides a physical environment optimized to promote and accelerate protein folding. The protein is Chaperonin GroEL of Chlorobium luteolum (strain DSM 273 / BCRC 81028 / 2530) (Pelodictyon luteolum).